The chain runs to 84 residues: Large ribosomal subunit protein bL27 (84 aa).

The interval 1-21 (MAHKKGGGSTKNGRDSNPKYL) is disordered.

The protein belongs to the bacterial ribosomal protein bL27 family.

In Chlorobium limicola (strain DSM 245 / NBRC 103803 / 6330), this protein is Large ribosomal subunit protein bL27.